Here is a 410-residue protein sequence, read N- to C-terminus: Peptidase T (410 aa).

Residue H79 coordinates Zn(2+). D81 is an active-site residue. Zn(2+) is bound at residue D142. E176 functions as the Proton acceptor in the catalytic mechanism. Zn(2+) is bound by residues E177, D199, and H381.

Belongs to the peptidase M20B family. Requires Zn(2+) as cofactor.

The protein resides in the cytoplasm. It carries out the reaction Release of the N-terminal residue from a tripeptide.. Functionally, cleaves the N-terminal amino acid of tripeptides. The chain is Peptidase T from Bacillus pumilus (strain SAFR-032).